A 1133-amino-acid chain; its full sequence is DNA-directed RNA polymerase subunit beta (1133 aa).

The segment at alanine 1085–phenylalanine 1133 is disordered. Residues arginine 1090–aspartate 1105 show a composition bias toward polar residues. Residues glutamate 1123–phenylalanine 1133 show a composition bias toward acidic residues.

This sequence belongs to the RNA polymerase beta chain family. As to quaternary structure, in cyanobacteria the RNAP catalytic core is composed of 2 alpha, 1 beta, 1 beta', 1 gamma and 1 omega subunit. When a sigma factor is associated with the core the holoenzyme is formed, which can initiate transcription.

The enzyme catalyses RNA(n) + a ribonucleoside 5'-triphosphate = RNA(n+1) + diphosphate. Its function is as follows. DNA-dependent RNA polymerase catalyzes the transcription of DNA into RNA using the four ribonucleoside triphosphates as substrates. This is DNA-directed RNA polymerase subunit beta from Synechococcus sp. (strain JA-3-3Ab) (Cyanobacteria bacterium Yellowstone A-Prime).